The chain runs to 393 residues: Acetylornithine aminotransferase (393 aa).

Residues 102-103 (GA) and phenylalanine 136 each bind pyridoxal 5'-phosphate. Arginine 139 provides a ligand contact to N(2)-acetyl-L-ornithine. Residue 219-222 (DEVQ) participates in pyridoxal 5'-phosphate binding. N6-(pyridoxal phosphate)lysine is present on lysine 248. Position 274 (serine 274) interacts with N(2)-acetyl-L-ornithine. Threonine 275 lines the pyridoxal 5'-phosphate pocket.

This sequence belongs to the class-III pyridoxal-phosphate-dependent aminotransferase family. ArgD subfamily. As to quaternary structure, homodimer. Pyridoxal 5'-phosphate serves as cofactor.

The protein resides in the cytoplasm. The enzyme catalyses N(2)-acetyl-L-ornithine + 2-oxoglutarate = N-acetyl-L-glutamate 5-semialdehyde + L-glutamate. Its pathway is amino-acid biosynthesis; L-arginine biosynthesis; N(2)-acetyl-L-ornithine from L-glutamate: step 4/4. The protein is Acetylornithine aminotransferase of Wolinella succinogenes (strain ATCC 29543 / DSM 1740 / CCUG 13145 / JCM 31913 / LMG 7466 / NCTC 11488 / FDC 602W) (Vibrio succinogenes).